The primary structure comprises 326 residues: DNA-directed RNA polymerase subunit alpha (326 aa).

Positions 1-230 (MLKIEKQAKA…LHLDPFLEIG (230 aa)) are alpha N-terminal domain (alpha-NTD). The alpha C-terminal domain (alpha-CTD) stretch occupies residues 249–326 (DIQVIDDKSH…YDLEKNGSPE (78 aa)).

Belongs to the RNA polymerase alpha chain family. As to quaternary structure, homodimer. The RNAP catalytic core consists of 2 alpha, 1 beta, 1 beta' and 1 omega subunit. When a sigma factor is associated with the core the holoenzyme is formed, which can initiate transcription.

The enzyme catalyses RNA(n) + a ribonucleoside 5'-triphosphate = RNA(n+1) + diphosphate. Its function is as follows. DNA-dependent RNA polymerase catalyzes the transcription of DNA into RNA using the four ribonucleoside triphosphates as substrates. The chain is DNA-directed RNA polymerase subunit alpha from Fusobacterium nucleatum subsp. nucleatum (strain ATCC 25586 / DSM 15643 / BCRC 10681 / CIP 101130 / JCM 8532 / KCTC 2640 / LMG 13131 / VPI 4355).